Consider the following 411-residue polypeptide: Bifunctional protein GlmU (411 aa).

The interval 1–204 (MDAIILCAGK…NGKLHGVELK (204 aa)) is pyrophosphorylase. UTP is bound by residues 6 to 9 (LCAG), Q74, and G79. The N-acetyl-alpha-D-glucosamine 1-phosphate site is built by T80, G130, N142, and N158. The interval 205-224 (GYWNDIGHPWDVLSANNHFL) is linker. The interval 225-411 (NKIISKVSGK…DELVITKKRN (187 aa)) is N-acetyltransferase. H308 serves as the catalytic Proton acceptor. Positions 384 and 401 each coordinate acetyl-CoA.

In the N-terminal section; belongs to the N-acetylglucosamine-1-phosphate uridyltransferase family. It in the C-terminal section; belongs to the transferase hexapeptide repeat family.

It carries out the reaction N-acetyl-alpha-D-glucosamine 1-phosphate + UTP + H(+) = UDP-N-acetyl-alpha-D-glucosamine + diphosphate. It catalyses the reaction alpha-D-glucosamine 1-phosphate + acetyl-CoA = N-acetyl-alpha-D-glucosamine 1-phosphate + CoA + H(+). It participates in nucleotide-sugar biosynthesis; UDP-N-acetyl-alpha-D-glucosamine biosynthesis; N-acetyl-alpha-D-glucosamine 1-phosphate from alpha-D-glucosamine 6-phosphate (route II): step 2/2. Its pathway is nucleotide-sugar biosynthesis; UDP-N-acetyl-alpha-D-glucosamine biosynthesis; UDP-N-acetyl-alpha-D-glucosamine from N-acetyl-alpha-D-glucosamine 1-phosphate: step 1/1. In terms of biological role, catalyzes the last two sequential reactions in the de novo biosynthetic pathway for UDP-N-acetyl-glucosamine (UDP-GlcNAc). Responsible for the acetylation of GlcN-1-P to GlcNAc-1-P, and for the uridyl transfer from UTP to GlcNAc-1-P, to produce UDP-GlcNAc and pyrophosphate. In Methanococcus maripaludis (strain DSM 14266 / JCM 13030 / NBRC 101832 / S2 / LL), this protein is Bifunctional protein GlmU.